Consider the following 365-residue polypeptide: Galactoside alpha-(1,2)-fucosyltransferase 1 (365 aa).

Over 1–8 the chain is Cytoplasmic; that stretch reads MWVPSRRH. The helical; Signal-anchor for type II membrane protein transmembrane segment at 9–28 threads the bilayer; sequence LCLTFLLVCVLAAIFFLNVY. At 29-365 the chain is on the lumenal side; the sequence is QDLFYSGLDL…LSPLQMLAGP (337 aa). Asn65, Asn301, and Asn327 each carry an N-linked (GlcNAc...) asparagine glycan.

Belongs to the glycosyltransferase 11 family.

Its subcellular location is the golgi apparatus. It is found in the golgi stack membrane. The enzyme catalyses a beta-D-galactosyl-(1-&gt;4)-N-acetyl-beta-D-glucosaminyl derivative + GDP-beta-L-fucose = an alpha-L-Fuc-(1-&gt;2)-beta-D-Gal-(1-&gt;4)-beta-D-GlcNAc derivative + GDP + H(+). It carries out the reaction a ganglioside GA1 + GDP-beta-L-fucose = a ganglioside Fuc-GA1 + GDP + H(+). The catalysed reaction is a beta-D-Gal-(1-&gt;3)-beta-D-GlcNAc-(1-&gt;3)-beta-D-Gal-(1-&gt;4)-beta-D-Glc-(1&lt;-&gt;1')-Cer(d18:1(4E)) + GDP-beta-L-fucose = alpha-L-fucosyl-(1-&gt;2)- beta-D-galactosyl-(1-&gt;3)-N-acetyl-beta-D-glucosaminyl-(1-&gt;3)-beta-D-galactosyl-(1-&gt;4)-beta-D-glucosyl-(1&lt;-&gt;1')-N-acylsphing-4-enine + GDP + H(+). It catalyses the reaction a neolactoside nLc4Cer(d18:1(4E)) + GDP-beta-L-fucose = a neolactoside IV(2)-alpha-Fuc-nLc4Cer(d18:1(4E)) + GDP + H(+). The enzyme catalyses a ganglioside GM1 + GDP-beta-L-fucose = a ganglioside Fuc-GM1 + GDP + H(+). It carries out the reaction beta-D-galactosyl-(1-&gt;3)-N-acetyl-D-galactosamine + GDP-beta-L-fucose = alpha-L-fucosyl-(1-&gt;2)-beta-D-galactosyl-(1-&gt;3)-N-acetyl-D-galactosamine + GDP + H(+). It functions in the pathway protein modification; protein glycosylation. Its function is as follows. Catalyzes the transfer of L-fucose, from a guanosine diphosphate-beta-L-fucose, to the terminal galactose residue of glycoconjugates through an alpha(1,2) linkage leading to H antigen synthesis that is an intermediate substrate in the synthesis of ABO blood group antigens. H antigen is essential for maturation of the glomerular layer of the main olfactory bulb, in cell migration and early cell-cell contacts during tumor associated angiogenesis. Preferentially fucosylates soluble lactose and to a lesser extent fucosylates glycolipids gangliosides GA1 and GM1a. This Sus scrofa (Pig) protein is Galactoside alpha-(1,2)-fucosyltransferase 1.